A 754-amino-acid polypeptide reads, in one-letter code: 1,4-alpha-glucan branching enzyme GlgB (754 aa).

The active-site Nucleophile is the Asp-431. Glu-484 functions as the Proton donor in the catalytic mechanism.

Belongs to the glycosyl hydrolase 13 family. GlgB subfamily. As to quaternary structure, monomer.

It catalyses the reaction Transfers a segment of a (1-&gt;4)-alpha-D-glucan chain to a primary hydroxy group in a similar glucan chain.. The protein operates within glycan biosynthesis; glycogen biosynthesis. In terms of biological role, catalyzes the formation of the alpha-1,6-glucosidic linkages in glycogen by scission of a 1,4-alpha-linked oligosaccharide from growing alpha-1,4-glucan chains and the subsequent attachment of the oligosaccharide to the alpha-1,6 position. This Prochlorococcus marinus (strain MIT 9515) protein is 1,4-alpha-glucan branching enzyme GlgB.